The sequence spans 212 residues: Cyclin-dependent kinase inhibitor 3 (212 aa).

The segment at 1 to 24 (MKPPISIQASEFDSSDEEPADDEQ) is disordered. The tract at residues 1 to 34 (MKPPISIQASEFDSSDEEPADDEQTPIQISWLPL) is interaction with CDK2. The segment covering 13–24 (DSSDEEPADDEQ) has biased composition (acidic residues). Positions 32–201 (LPLSRVNCSQ…FRDKLAAYLS (170 aa)) constitute a Tyrosine-protein phosphatase domain. C140 (phosphocysteine intermediate) is an active-site residue.

The protein belongs to the protein-tyrosine phosphatase family. As to quaternary structure, interacts with cyclin-dependent kinases such as CDK1, CDK2 and CDK3. Does not interact with CDK4. Interacts (via C-terminus) with phosphorylated CDK2 (via C-terminal helix). Interacts with MS4A3 (via C-terminus); the interaction enhances CDKN3 enzymatic activity.

The protein resides in the cytoplasm. It is found in the perinuclear region. It carries out the reaction O-phospho-L-tyrosyl-[protein] + H2O = L-tyrosyl-[protein] + phosphate. It catalyses the reaction O-phospho-L-seryl-[protein] + H2O = L-seryl-[protein] + phosphate. The enzyme catalyses O-phospho-L-threonyl-[protein] + H2O = L-threonyl-[protein] + phosphate. In terms of biological role, may play a role in cell cycle regulation. Dual specificity phosphatase active toward substrates containing either phosphotyrosine or phosphoserine residues. Dephosphorylates CDK2 at 'Thr-160' in a cyclin-dependent manner. This is Cyclin-dependent kinase inhibitor 3 from Rattus norvegicus (Rat).